We begin with the raw amino-acid sequence, 486 residues long: Malonate-semialdehyde dehydrogenase 2 (486 aa).

5 residues coordinate NAD(+): Phe-154, Lys-178, Glu-181, Arg-182, and Ser-231. Cys-286 (nucleophile) is an active-site residue. An NAD(+)-binding site is contributed by Glu-385.

The protein belongs to the aldehyde dehydrogenase family. IolA subfamily. Homotetramer.

It carries out the reaction 3-oxopropanoate + NAD(+) + CoA + H2O = hydrogencarbonate + acetyl-CoA + NADH + H(+). The catalysed reaction is 2-methyl-3-oxopropanoate + NAD(+) + CoA + H2O = propanoyl-CoA + hydrogencarbonate + NADH + H(+). Its pathway is polyol metabolism; myo-inositol degradation into acetyl-CoA; acetyl-CoA from myo-inositol: step 7/7. Catalyzes the oxidation of malonate semialdehyde (MSA) and methylmalonate semialdehyde (MMSA) into acetyl-CoA and propanoyl-CoA, respectively. Is involved in a myo-inositol catabolic pathway. Bicarbonate, and not CO2, is the end-product of the enzymatic reaction. The sequence is that of Malonate-semialdehyde dehydrogenase 2 from Shouchella clausii (strain KSM-K16) (Alkalihalobacillus clausii).